We begin with the raw amino-acid sequence, 176 residues long: Peptidoglycan-associated lipoprotein (176 aa).

The first 21 residues, 1 to 21 (MKAGSFYKLGLLVASAVLVAA), serve as a signal peptide directing secretion. Cysteine 22 carries the N-palmitoyl cysteine lipid modification. Cysteine 22 carries the S-diacylglycerol cysteine lipid modification. Residues 60–176 (YTTQAPHNQL…RVEFIYEATR (117 aa)) enclose the OmpA-like domain.

Belongs to the Pal lipoprotein family. As to quaternary structure, the Tol-Pal system is composed of five core proteins: the inner membrane proteins TolA, TolQ and TolR, the periplasmic protein TolB and the outer membrane protein Pal. They form a network linking the inner and outer membranes and the peptidoglycan layer.

The protein resides in the cell outer membrane. Part of the Tol-Pal system, which plays a role in outer membrane invagination during cell division and is important for maintaining outer membrane integrity. Very strongly associated with the peptidoglycan. The polypeptide is Peptidoglycan-associated lipoprotein (Legionella pneumophila).